Consider the following 563-residue polypeptide: uncharacterized protein (563 aa).

It belongs to the HyuB family.

This is an uncharacterized protein from Methanocaldococcus jannaschii (strain ATCC 43067 / DSM 2661 / JAL-1 / JCM 10045 / NBRC 100440) (Methanococcus jannaschii).